Reading from the N-terminus, the 181-residue chain is Adenylyl-sulfate kinase (181 aa).

20–27 (GLSGAGKS) provides a ligand contact to ATP. Residue Ser94 is the Phosphoserine intermediate of the active site.

It belongs to the APS kinase family.

It carries out the reaction adenosine 5'-phosphosulfate + ATP = 3'-phosphoadenylyl sulfate + ADP + H(+). Its pathway is sulfur metabolism; hydrogen sulfide biosynthesis; sulfite from sulfate: step 2/3. Catalyzes the synthesis of activated sulfate. This chain is Adenylyl-sulfate kinase, found in Deinococcus deserti (strain DSM 17065 / CIP 109153 / LMG 22923 / VCD115).